We begin with the raw amino-acid sequence, 283 residues long: Undecaprenyl-diphosphatase (283 aa).

6 helical membrane-spanning segments follow: residues 47 to 67, 94 to 114, 127 to 147, 197 to 217, 227 to 247, and 261 to 281; these read PGLS…IAYF, LGIA…CIKL, VPAI…AELL, AARF…LVEL, GGVL…WLAI, and IFVV…SGSA.

The protein belongs to the UppP family.

Its subcellular location is the cell inner membrane. It carries out the reaction di-trans,octa-cis-undecaprenyl diphosphate + H2O = di-trans,octa-cis-undecaprenyl phosphate + phosphate + H(+). In terms of biological role, catalyzes the dephosphorylation of undecaprenyl diphosphate (UPP). Confers resistance to bacitracin. The chain is Undecaprenyl-diphosphatase from Synechococcus sp. (strain CC9311).